The following is a 623-amino-acid chain: MATEHVNGNGTEEPMDTTSAVIHSENFQTLLDAGLPQKVAEKLDEIYVAGLVAHSDLDERAIEALKEFNEDGALAVLQQFKDSDLSHVQNKSAFLCGVMKTYRQREKQGTKVADSSKGPDEAKIKALLERTGYTLDVTTGQRKYGGPPPDSVYSGQQPSVGTEIFVGKIPRDLFEDELVPLFEKAGPIWDLRLMMDPLTGLNRGYAFVTFCTKEAAQEAVKLYNNHEIRSGKHIGVCISVANNRLFVGSIPKSKTKEQILEEFSKVTEGLTDVILYHQPDDKKKNRGFCFLEYEDHKTAAQARRRLMSGKVKVWGNVGTVEWADPIEDPDPEVMAKVKVLFVRNLANTVTEEILEKAFSQFGKLERVKKLKDYAFIHFDERDGAVKAMEEMNGKDLEGENIEIVFAKPPDQKRKERKAQRQAAKNQMYDDYYYYGPPHMPPPTRGRGRGGRGGYGYPPDYYGYEDYYDYYGYDYHNYRGGYEDPYYGYEDFQVGARGRGGRGARGAAPSRGRGAAPPRGRAGYSQRGGPGSARGVRGARGGAQQQRGRGVRGARGGRGGNVGGKRKADGYNQPDSKRRQTNNQNWGSQPIAQQPLQGGDHSGNYGYKSENQEFYQDTFGQQWK.

Ala-2 carries the N-acetylalanine modification. Ser-159 carries the post-translational modification Phosphoserine. RRM domains are found at residues 162-241, 243-325, and 338-408; these read TEIF…ISVA, NRLF…WADP, and KVLF…FAKP. Residue Lys-168 forms a Glycyl lysine isopeptide (Lys-Gly) (interchain with G-Cter in SUMO2) linkage. Residue Lys-221 is modified to N6-acetyllysine. Lys-363 is modified (N6-acetyllysine). A Phosphotyrosine modification is found at Tyr-373. Positions 400-561 are interaction with APOBEC1; sequence NIEIVFAKPP…GARGGRGGNV (162 aa). Arg-444 is modified (asymmetric dimethylarginine; by PRMT1; alternate). Arg-444 is subject to Omega-N-methylarginine; by PRMT1; alternate. Repeat copies occupy residues 448-450, 451-453, 460-464, 469-472, 478-480, and 485-488. The tract at residues 448–559 is 8 X 3 AA repeats of R-G-G; sequence RGGRGGYGYP…VRGARGGRGG (112 aa). Residues 460–488 are 3 X 4 AA repeats of Y-Y-G-Y; it reads YYGYEDYYDYYGYDYHNYRGGYEDPYYGY. An Omega-N-methylarginine; by PRMT1 modification is found at Arg-496. The disordered stretch occupies residues 497–623; that stretch reads GRGGRGARGA…YQDTFGQQWK (127 aa). Residues 498-500 form a 1-4 repeat; the sequence is RGG. A compositionally biased stretch (low complexity) spans 504–522; sequence RGAAPSRGRGAAPPRGRAG. Residue Arg-510 is modified to Asymmetric dimethylarginine; by PRMT1. Arg-518, Arg-526, Arg-536, and Arg-539 each carry asymmetric dimethylarginine; by PRMT1; alternate. Residues Arg-518, Arg-526, Arg-536, and Arg-539 each carry the omega-N-methylarginine; by PRMT1; alternate modification. Residues 518-549 form an interaction with SMN region; sequence RGRAGYSQRGGPGSARGVRGARGGAQQQRGRG. The 1-5 repeat unit spans residues 526–528; sequence RGG. 3 repeat units span residues 539–541, 554–556, and 557–559. Gly residues predominate over residues 550–562; that stretch reads VRGARGGRGGNVG. Positions 564–578 match the Bipartite nuclear localization signal motif; sequence KRKADGYNQPDSKRR. The span at 580 to 595 shows a compositional bias: polar residues; it reads TNNQNWGSQPIAQQPL. Ser-587 carries the post-translational modification Phosphoserine. Lys-607 is covalently cross-linked (Glycyl lysine isopeptide (Lys-Gly) (interchain with G-Cter in SUMO2)). Residues 611–623 show a composition bias toward polar residues; the sequence is QEFYQDTFGQQWK.

Isoform 1 is a component of the APOB mRNA editosome complex and interacts with APOBEC1 and A1CF (APOBEC1 complementation factor). Part of a complex associated with the FOS mCRD domain and consisting of PABPC1, PAIP1, CSDE1/UNR, HNRPD and SYNCRIP. Isoform 3 interacts with HNRPR. Interacts with POLR2A hyperphosphorylated C-terminal domain. Isoform 1, isoform 2 and isoform 3 interact with SMN. Isoform 3 interacts through its C-terminal domain with SYT7, SYT8 and SYT9. The non-phosphorylated and phosphorylated forms are colocalized with PAIP1 in polysomes. Interacts with HABP4. Identified in a histone pre-mRNA complex, at least composed of ERI1, LSM11, SLBP, SNRPB, SYNCRIP and YBX1. Identified in the spliceosome C complex. Component of the coding region determinant (CRD)-mediated complex, composed of DHX9, HNRNPU, IGF2BP1, SYNCRIP and YBX1. Identified in a mRNP complex, at least composed of DHX9, DDX3X, ELAVL1, HNRNPU, IGF2BP1, ILF3, PABPC1, PCBP2, PTBP2, STAU1, STAU2, SYNCRIP and YBX1. Identified in a mRNP granule complex, at least composed of ACTB, ACTN4, DHX9, ERG, HNRNPA1, HNRNPA2B1, HNRNPAB, HNRNPD, HNRNPL, HNRNPR, HNRNPU, HSPA1, HSPA8, IGF2BP1, ILF2, ILF3, NCBP1, NCL, PABPC1, PABPC4, PABPN1, RPLP0, RPS3, RPS3A, RPS4X, RPS8, RPS9, SYNCRIP, YBX1 and untranslated mRNAs. Interacts with GTPBP1. Component of the GAIT complex; in humans the complex assembly seems to be a two-step process in which EPRS1 first associates with SYNCRIP to form a pre-GAIT complex which is deficient in GAIT element binding. As to quaternary structure, (Microbial infection) Interacts with minute virus of mice (MVM) NS1 protein. In terms of assembly, (Microbial infection) Interacts with herpes virus 8/HHV-8 protein vIRF-1; this interaction induces ubiquitination and degradation of SYNCRIP. Phosphorylated on tyrosine. The membrane-bound form found in microsomes is phosphorylated in vitro by insulin receptor tyrosine kinase (INSR). Phosphorylation is inhibited upon binding to RNA, whereas the cytoplasmic form is poorly phosphorylated. Ubiquitously expressed. Detected in heart, brain, pancreas, placenta, spleen, lung, liver, skeletal muscle, kidney, thymus, prostate, uterus, small intestine, colon, peripheral blood and testis.

The protein resides in the cytoplasm. It localises to the microsome. It is found in the endoplasmic reticulum. Its subcellular location is the nucleus. The protein localises to the nucleoplasm. Functionally, heterogenous nuclear ribonucleoprotein (hnRNP) implicated in mRNA processing mechanisms. Component of the CRD-mediated complex that promotes MYC mRNA stability. Isoform 1, isoform 2 and isoform 3 are associated in vitro with pre-mRNA, splicing intermediates and mature mRNA protein complexes. Isoform 1 binds to apoB mRNA AU-rich sequences. Isoform 1 is part of the APOB mRNA editosome complex and may modulate the postranscriptional C to U RNA-editing of the APOB mRNA through either by binding to A1CF (APOBEC1 complementation factor), to APOBEC1 or to RNA itself. May be involved in translationally coupled mRNA turnover. Implicated with other RNA-binding proteins in the cytoplasmic deadenylation/translational and decay interplay of the FOS mRNA mediated by the major coding-region determinant of instability (mCRD) domain. Interacts in vitro preferentially with poly(A) and poly(U) RNA sequences. Isoform 3 may be involved in cytoplasmic vesicle-based mRNA transport through interaction with synaptotagmins. Component of the GAIT (gamma interferon-activated inhibitor of translation) complex which mediates interferon-gamma-induced transcript-selective translation inhibition in inflammation processes. Upon interferon-gamma activation assembles into the GAIT complex which binds to stem loop-containing GAIT elements in the 3'-UTR of diverse inflammatory mRNAs (such as ceruplasmin) and suppresses their translation; seems not to be essential for GAIT complex function. The protein is Heterogeneous nuclear ribonucleoprotein Q (SYNCRIP) of Homo sapiens (Human).